The primary structure comprises 214 residues: 3-isopropylmalate dehydratase small subunit (214 aa).

Belongs to the LeuD family. LeuD type 1 subfamily. In terms of assembly, heterodimer of LeuC and LeuD.

It carries out the reaction (2R,3S)-3-isopropylmalate = (2S)-2-isopropylmalate. Its pathway is amino-acid biosynthesis; L-leucine biosynthesis; L-leucine from 3-methyl-2-oxobutanoate: step 2/4. In terms of biological role, catalyzes the isomerization between 2-isopropylmalate and 3-isopropylmalate, via the formation of 2-isopropylmaleate. This is 3-isopropylmalate dehydratase small subunit from Alcanivorax borkumensis (strain ATCC 700651 / DSM 11573 / NCIMB 13689 / SK2).